Consider the following 496-residue polypeptide: Glycerol kinase (496 aa).

Threonine 12 lines the ADP pocket. Residues threonine 12, threonine 13, and serine 14 each coordinate ATP. Threonine 12 is a binding site for sn-glycerol 3-phosphate. Arginine 16 contacts ADP. Residues arginine 82, glutamate 83, and tyrosine 134 each coordinate sn-glycerol 3-phosphate. Glycerol contacts are provided by arginine 82, glutamate 83, and tyrosine 134. Phosphohistidine; by HPr is present on histidine 230. Aspartate 244 contributes to the sn-glycerol 3-phosphate binding site. The glycerol site is built by aspartate 244 and glutamine 245. 2 residues coordinate ADP: threonine 266 and glycine 309. 4 residues coordinate ATP: threonine 266, glycine 309, glutamine 313, and glycine 410. ADP-binding residues include glycine 410 and asparagine 414.

This sequence belongs to the FGGY kinase family. Homotetramer and homodimer (in equilibrium). The phosphoenolpyruvate-dependent sugar phosphotransferase system (PTS), including enzyme I, and histidine-containing protein (HPr) are required for the phosphorylation, which leads to the activation of the enzyme.

The enzyme catalyses glycerol + ATP = sn-glycerol 3-phosphate + ADP + H(+). Its pathway is polyol metabolism; glycerol degradation via glycerol kinase pathway; sn-glycerol 3-phosphate from glycerol: step 1/1. Activated by phosphorylation and inhibited by fructose 1,6-bisphosphate (FBP). Key enzyme in the regulation of glycerol uptake and metabolism. Catalyzes the phosphorylation of glycerol to yield sn-glycerol 3-phosphate. The protein is Glycerol kinase of Bacillus cereus (strain Q1).